A 289-amino-acid chain; its full sequence is 3-hydroxy-16-methoxy-2,3-dihydrotabersonine N-methyltransferase (289 aa).

The SAM motif I stretch occupies residues 71-80; it reads MLDVGSGLGG. The interval 134-142 is SAM motif II; sequence GKFDVVFTI. Residues 161-170 form an SAM motif III region; sequence VAAPGAAIII. A Microbody targeting signal motif is present at residues 287-289; the sequence is KSI.

It belongs to the class I-like SAM-binding methyltransferase superfamily. gTMT family. As to quaternary structure, homodimer. In terms of tissue distribution, mainly expressed in young leaves, and, to a lower extent, in mature leaves, flowers, stems and roots (at protein level).

It is found in the thylakoid. Its subcellular location is the peroxisome. It carries out the reaction (3R)-3-hydroxy-16-methoxy-2,3-dihydrotabersonine + S-adenosyl-L-methionine = deacetoxyvindoline + S-adenosyl-L-homocysteine + H(+). The protein operates within alkaloid biosynthesis; vindoline biosynthesis. With respect to regulation, inhibited by gamma-tocopherol. Its function is as follows. S-adenosyl-L-methionine-dependent N-methyltransferase that catalyzes a nitrogen methylation involved in vindoline biosynthesis. Displays a strict requirement for a 2,3-dihydro bond in the aspidosperma skeleton. Can use 2,3-dihydrotabersonine, 2,3-dihydro-3-hydroxytabersonine and 2,3,6,7-tetraydro-3-hydroxytabersonine as substrates, but not tabersonine, vincadifformine, 21-hydroxycyclolochnericine, tryptamine, norharmane, harmaline, catharanthine, norajmaline, ajmaline, serpentine, ajmalicine, yohimbine or gamma-tocopherol. Inactive with picrinine as substrate. This Catharanthus roseus (Madagascar periwinkle) protein is 3-hydroxy-16-methoxy-2,3-dihydrotabersonine N-methyltransferase.